The sequence spans 138 residues: Acidic phospholipase A2 Cvv-E6f (138 aa).

Residues 1–16 (MRTLWIVAVLLLGVEG) form the signal peptide. Disulfide bonds link C42–C131, C44–C60, C59–C111, C65–C138, C66–C104, C73–C97, and C91–C102. Residues Y43, G45, and G47 each contribute to the Ca(2+) site. H63 is a catalytic residue. Residue D64 coordinates Ca(2+). The active site involves D105.

Ca(2+) serves as cofactor. As to expression, expressed by the venom gland.

The protein resides in the secreted. The catalysed reaction is a 1,2-diacyl-sn-glycero-3-phosphocholine + H2O = a 1-acyl-sn-glycero-3-phosphocholine + a fatty acid + H(+). Snake venom phospholipase A2 (PLA2) that shows very low inhibition of ADP-induced platelet aggregation in platelet-rich plasma of human, rabbit and guinea pig. In vivo, shows efficient edema-inducing activities in rat paws. PLA2 catalyzes the calcium-dependent hydrolysis of the 2-acyl groups in 3-sn-phosphoglycerides. This is Acidic phospholipase A2 Cvv-E6f from Crotalus viridis viridis (Prairie rattlesnake).